The primary structure comprises 163 residues: Nucleotide-binding protein HD_0358 (163 aa).

It belongs to the YajQ family.

Its function is as follows. Nucleotide-binding protein. The chain is Nucleotide-binding protein HD_0358 from Haemophilus ducreyi (strain 35000HP / ATCC 700724).